A 518-amino-acid chain; its full sequence is Membrane-bound lytic murein transglycosylase F (518 aa).

The first 21 residues, 1-21, serve as a signal peptide directing secretion; sequence MKKLKINYLFIGILALLLAVA. The interval 22-269 is non-LT domain; the sequence is LWPSIPWFGK…RIEEKYLGHG (248 aa). The LT domain stretch occupies residues 270–518; it reads DDFDYVDTRT…SRKGSEEKQN (249 aa). Residue Glu314 is part of the active site.

In the N-terminal section; belongs to the bacterial solute-binding protein 3 family. It in the C-terminal section; belongs to the transglycosylase Slt family.

The protein localises to the cell outer membrane. The enzyme catalyses Exolytic cleavage of the (1-&gt;4)-beta-glycosidic linkage between N-acetylmuramic acid (MurNAc) and N-acetylglucosamine (GlcNAc) residues in peptidoglycan, from either the reducing or the non-reducing ends of the peptidoglycan chains, with concomitant formation of a 1,6-anhydrobond in the MurNAc residue.. Functionally, murein-degrading enzyme that degrades murein glycan strands and insoluble, high-molecular weight murein sacculi, with the concomitant formation of a 1,6-anhydromuramoyl product. Lytic transglycosylases (LTs) play an integral role in the metabolism of the peptidoglycan (PG) sacculus. Their lytic action creates space within the PG sacculus to allow for its expansion as well as for the insertion of various structures such as secretion systems and flagella. The protein is Membrane-bound lytic murein transglycosylase F of Escherichia coli (strain ATCC 8739 / DSM 1576 / NBRC 3972 / NCIMB 8545 / WDCM 00012 / Crooks).